A 788-amino-acid chain; its full sequence is Glucan 1,3-beta-glucosidase (788 aa).

The signal sequence occupies residues 1–42; that stretch reads MRFSSLLACLGAVGIQAAAIPFQRRVDNTTDSGSLDAAQAAA. 4 N-linked (GlcNAc...) asparagine glycosylation sites follow: N28, N233, N381, and N773.

It belongs to the glycosyl hydrolase 55 family.

The catalysed reaction is Successive hydrolysis of beta-D-glucose units from the non-reducing ends of (1-&gt;3)-beta-D-glucans, releasing alpha-glucose.. The chain is Glucan 1,3-beta-glucosidase (EXG1) from Cochliobolus carbonum (Maize leaf spot fungus).